A 138-amino-acid chain; its full sequence is Phospholipase A2 group V (138 aa).

The signal sequence occupies residues 1–20 (MKGLLPLAWFLACSVPAVQG). 6 disulfides stabilise this stretch: cysteine 46-cysteine 137, cysteine 48-cysteine 64, cysteine 63-cysteine 117, cysteine 70-cysteine 110, cysteine 79-cysteine 103, and cysteine 97-cysteine 108. Residues tyrosine 47, glycine 49, and glycine 51 each contribute to the Ca(2+) site. Histidine 67 is an active-site residue. Residue aspartate 68 coordinates Ca(2+). Aspartate 111 is an active-site residue.

Belongs to the phospholipase A2 family. It depends on Ca(2+) as a cofactor. This enzyme lacks one of the seven disulfide bonds found in similar PLA2 proteins. In terms of tissue distribution, heart, placenta and less abundantly, in lung. Detected in the outer and inner plexiform layers of the retina (at protein level). Expressed in monocytes and macrophages.

It is found in the secreted. Its subcellular location is the cell membrane. The protein localises to the cytoplasmic vesicle. The protein resides in the phagosome. It localises to the recycling endosome. It is found in the golgi apparatus. Its subcellular location is the cis-Golgi network. The protein localises to the trans-Golgi network. The enzyme catalyses a 1,2-diacyl-sn-glycero-3-phosphocholine + H2O = a 1-acyl-sn-glycero-3-phosphocholine + a fatty acid + H(+). The catalysed reaction is 1-hexadecanoyl-2-(9Z-octadecenoyl)-sn-glycero-3-phosphocholine + H2O = 1-hexadecanoyl-sn-glycero-3-phosphocholine + (9Z)-octadecenoate + H(+). It carries out the reaction 1-hexadecanoyl-2-(5Z,8Z,11Z,14Z-eicosatetraenoyl)-sn-glycero-3-phosphocholine + H2O = 1-hexadecanoyl-sn-glycero-3-phosphocholine + (5Z,8Z,11Z,14Z)-eicosatetraenoate + H(+). It catalyses the reaction 1-hexadecanoyl-2-(9Z,12Z-octadecadienoyl)-sn-glycero-3-phosphoethanolamine + H2O = 1-hexadecanoyl-sn-glycero-3-phosphoethanolamine + (9Z,12Z)-octadecadienoate + H(+). The enzyme catalyses 1-hexadecanoyl-2-(5Z,8Z,11Z,14Z-eicosatetraenoyl)-sn-glycero-3-phosphoethanolamine + H2O = 1-hexadecanoyl-sn-glycero-3-phosphoethanolamine + (5Z,8Z,11Z,14Z)-eicosatetraenoate + H(+). The catalysed reaction is 1-octadecanoyl-2-(5Z,8Z,11Z,14Z-eicosatetraenoyl)-sn-glycero-3-phospho-(1D-myo-inositol) + H2O = 1-octadecanoyl-sn-glycero-3-phospho-(1D-myo-inositol) + (5Z,8Z,11Z,14Z)-eicosatetraenoate + H(+). It carries out the reaction 1-hexadecanoyl-2-(9Z-octadecenoyl)-sn-glycero-3-phosphoglycerol + H2O = 1-hexadecanoyl-sn-glycero-3-phosphoglycerol + (9Z)-octadecenoate + H(+). It catalyses the reaction N-hexadecanoyl-1,2-di-(9Z-octadecenoyl)-sn-glycero-3-phosphoethanolamine + H2O = N-hexadecanoyl-1-(9Z-octadecenoyl)-sn-glycero-3-phosphoethanolamine + (9Z)-octadecenoate + H(+). The enzyme catalyses 1'-[1,2-di-(9Z-octadecenoyl)-sn-glycero-3-phospho]-3'-[1-(9Z-octadecenoyl)-sn-glycero-3-phospho]-glycerol + H2O = 1',3'-bis-[1-(9Z-octadecenoyl)-sn-glycero-3-phospho]-glycerol + (9Z)-octadecenoate + H(+). The catalysed reaction is 1',3'-bis[1,2-di-(9Z-octadecenoyl)-sn-glycero-3-phospho]-glycerol + H2O = 1'-[1,2-di-(9Z-octadecenoyl)-sn-glycero-3-phospho]-3'-[1-(9Z-octadecenoyl)-sn-glycero-3-phospho]-glycerol + (9Z)-octadecenoate + H(+). The protein operates within lipid metabolism; phospholipid metabolism. Its pathway is lipid metabolism; leukotriene B4 biosynthesis. It functions in the pathway lipid metabolism; leukotriene C4 biosynthesis. With respect to regulation, activated by cardiolipin. Its function is as follows. Secretory calcium-dependent phospholipase A2 that primarily targets extracellular phospholipids. Hydrolyzes the ester bond of the fatty acyl group attached at sn-2 position of phospholipids (phospholipase A2 activity), preferentially releasing fatty acyl groups with a low degree of unsaturation such as oleoyl (C18:1) and linoleoyl (C18:2) groups. Hydrolyzes low-density lipoprotein (LDL) phospholipids releasing unsaturated fatty acids that drive macrophage polarization toward an M2 phenotype. May act in an autocrine and paracrine manner. Contributes to lipid remodeling of cellular membranes at different subcellular locations and generation of lipid mediators involved in pathogen clearance. Cleaves sn-2 fatty acyl chains of cardiolipin, a major component of the inner membrane of mitochondria and bacterial membranes. Promotes phagocytosis of bacteria in macrophages through production of lysophosphatidylethanolamines. Displays bactericidal activity against Gram-positive bacteria by directly hydrolyzing phospholipids of the bacterial membrane. Promotes phagocytosis and killing of ingested fungi likely through controlling phagosome-lysosome fusion and phagosome maturation. Plays a role in biosynthesis of cysteinyl leukotrienes (CysLTs) in myeloid cells. In eosinophils, triggers perinuclear arachidonate release and LTC4 synthesis in a PLA2G4A-independent way. In neutrophils, amplifies CysLTs biosynthesis initiated by PLA2G4A. Promotes immune complex clearance in macrophages via stimulating synthesis of CysLTs, which act through CYSLTR1 to trigger phagocytosis. May regulate antigen processing in antigen-presenting cells. In pulmonary macrophages regulates IL33 production required for activation of group 2 innate lymphoid cells. May play a role in the biosynthesis of N-acyl ethanolamines that regulate energy metabolism. Hydrolyzes N-acyl phosphatidylethanolamines to N-acyl lysophosphatidylethanolamines, which are further cleaved by a lysophospholipase D to release N-acyl ethanolamines. The sequence is that of Phospholipase A2 group V (PLA2G5) from Homo sapiens (Human).